A 426-amino-acid chain; its full sequence is Selenate reductase subunit C (426 aa).

10 helical membrane passes run 5–25, 40–60, 78–98, 119–139, 187–207, 223–243, 261–281, 302–322, 330–350, and 385–405; these read LYFT…YIRL, WGLW…SFLL, LALF…LIDL, WEIQ…WFLM, ILGI…GSLF, IIFL…LYSF, LLTL…LIGL, FIFW…LITI, MGLA…ILVI, and VGLI…VPVF.

Belongs to the NrfD family. In terms of assembly, the complex is composed of three subunits: SrdA, SrdB and SrdC.

The protein localises to the cell membrane. It catalyses the reaction selenite + a quinone + H2O = selenate + a quinol. Component of the respiratory selenate reductase complex, which catalyzes the reduction of selenate to selenite. This subunit probably receives electrons directly from the membrane quinone pool and transfers the electrons to the iron-sulfur clusters of SrdB. May be the membrane anchor protein subunit of the complex. The protein is Selenate reductase subunit C of Mesobacillus selenatarsenatis (strain DSM 18680 / JCM 14380 / FERM P-15431 / SF-1).